Consider the following 275-residue polypeptide: Large ribosomal subunit protein uL2 (275 aa).

Residues 38–53 (SSKAGRNNNGRITTRH) show a composition bias toward polar residues. Disordered stretches follow at residues 38–59 (SSKA…GGHK) and 224–257 (AMNP…KGFR).

The protein belongs to the universal ribosomal protein uL2 family. In terms of assembly, part of the 50S ribosomal subunit. Forms a bridge to the 30S subunit in the 70S ribosome.

Its function is as follows. One of the primary rRNA binding proteins. Required for association of the 30S and 50S subunits to form the 70S ribosome, for tRNA binding and peptide bond formation. It has been suggested to have peptidyltransferase activity; this is somewhat controversial. Makes several contacts with the 16S rRNA in the 70S ribosome. The sequence is that of Large ribosomal subunit protein uL2 from Burkholderia multivorans (strain ATCC 17616 / 249).